The following is a 320-amino-acid chain: MENRKTFSWLKEQMIRSISVSIMIYVITRTSISNAYPIFAQQGYENPREATGRIVCANCHLANKPVDIEVPQAVLPDTVFEAVLRIPYDMQLKQVLANGKKGGLNVGAVLILPEGFELAPPDRISPELKEKIGNLSFQSYRPNKKNILVIGPVPGKKYSEIVFPILSPDPATKKDVHFLKYPIYVGGNRGRGQIYPDGTKSNNTVYNATSTGIVKKILRKEKGGYEISIVDASDGRQVIDIIPPGPELLVSEGESIKLDQPLTSNPNVGGFGQGDAEIVLQDPLRVQGLLFFFASVILAQVFLVLKKKQFEKVQLYEMNF.

Positions 1 to 35 (MENRKTFSWLKEQMIRSISVSIMIYVITRTSISNA) are cleaved as a signal peptide. Residues tyrosine 36, cysteine 56, cysteine 59, and histidine 60 each coordinate heme. The helical transmembrane segment at 286–306 (VQGLLFFFASVILAQVFLVLK) threads the bilayer.

It belongs to the cytochrome f family. The 4 large subunits of the cytochrome b6-f complex are cytochrome b6, subunit IV (17 kDa polypeptide, petD), cytochrome f and the Rieske protein, while the 4 small subunits are PetG, PetL, PetM and PetN. The complex functions as a dimer. Heme is required as a cofactor.

The protein localises to the plastid. Its subcellular location is the chloroplast thylakoid membrane. Its function is as follows. Component of the cytochrome b6-f complex, which mediates electron transfer between photosystem II (PSII) and photosystem I (PSI), cyclic electron flow around PSI, and state transitions. In Saccharum hybrid (Sugarcane), this protein is Cytochrome f.